The following is a 306-amino-acid chain: Aspartate carbamoyltransferase catalytic subunit (306 aa).

Carbamoyl phosphate-binding residues include Arg-49 and Thr-50. Lys-77 lines the L-aspartate pocket. Arg-99, His-127, and Gln-130 together coordinate carbamoyl phosphate. Residues Arg-160 and Arg-211 each contribute to the L-aspartate site. The carbamoyl phosphate site is built by Ala-250 and Pro-251.

Belongs to the aspartate/ornithine carbamoyltransferase superfamily. ATCase family. In terms of assembly, heterododecamer (2C3:3R2) of six catalytic PyrB chains organized as two trimers (C3), and six regulatory PyrI chains organized as three dimers (R2).

It catalyses the reaction carbamoyl phosphate + L-aspartate = N-carbamoyl-L-aspartate + phosphate + H(+). It participates in pyrimidine metabolism; UMP biosynthesis via de novo pathway; (S)-dihydroorotate from bicarbonate: step 2/3. Its function is as follows. Catalyzes the condensation of carbamoyl phosphate and aspartate to form carbamoyl aspartate and inorganic phosphate, the committed step in the de novo pyrimidine nucleotide biosynthesis pathway. In Bacillus licheniformis (strain ATCC 14580 / DSM 13 / JCM 2505 / CCUG 7422 / NBRC 12200 / NCIMB 9375 / NCTC 10341 / NRRL NRS-1264 / Gibson 46), this protein is Aspartate carbamoyltransferase catalytic subunit.